The primary structure comprises 640 residues: Leucine-rich repeat-containing protein 4C (640 aa).

A signal peptide spans 1 to 44 (MLNKMTLHPQQIMIGPRFNRALFDPLLVVLLALQLLVVAGLVRA). An LRRNT domain is found at 45–76 (QTCPSVCSCSNQFSKVICVRKNLREVPDGIST). LRR repeat units follow at residues 77–98 (NTRL…SFKH), 101–122 (HLEI…AFNG), 125–146 (NLNT…AFVY), 149–170 (KLKE…AFNR), 173–195 (SLRR…AFEG), 198–219 (NLRY…TPLI), 220–241 (KLDE…SFQG), 244–265 (HLQK…AFDN), and 268–289 (SLVE…LFTP). An LRRCT domain is found at 301–353 (NPWNCNCDILWLSWWIKDMAPSNTACCARCNTPPNLKGRYIGELDQNYFTCYA). The Ig-like C2-type domain maps to 354–442 (PVIVEPPADL…GNTTASATLN (89 aa)). C375 and C426 are joined by a disulfide. Positions 463–483 (EPSQDEARTTDNNVGPTPVVD) are disordered. A helical membrane pass occupies residues 528–548 (IIIGCFVAITLMAAVMLVIFY). S631 is subject to Phosphoserine.

As to quaternary structure, interacts with NTNG1 and WHRN. In terms of tissue distribution, highly expressed in the cerebral cortex, including frontal, parietal and occipital lobes. Putamen, amygdala, hippocampus and medulla oblongata show moderate expression. Caudate nucleus and thalamus express small amounts, whereas other brain regions show very weak or no expression.

It is found in the postsynaptic cell membrane. Functionally, may promote neurite outgrowth of developing thalamic neurons. This chain is Leucine-rich repeat-containing protein 4C (LRRC4C), found in Homo sapiens (Human).